The following is a 94-amino-acid chain: uncharacterized protein (94 aa).

Expressed in heart.

This is an uncharacterized protein from Homo sapiens (Human).